Consider the following 707-residue polypeptide: Protein kinase C-like 1B (707 aa).

Residues 1–114 (MLFTGTVRVR…KIGSANDIWV (114 aa)) form the C2 domain. 2 Phorbol-ester/DAG-type zinc fingers span residues 170–220 (GHKF…VWKC) and 248–298 (PHRF…ANNC). The interval 323-368 (SKKKPSIMTDTSTDISGSSNSENSGYLQQISEDDSGTTSSRSASKV) is disordered. The span at 330-365 (MTDTSTDISGSSNSENSGYLQQISEDDSGTTSSRSA) shows a compositional bias: polar residues. One can recognise a Protein kinase domain in the interval 378–638 (FTFMKVLGKG…EDAIRAHPFF (261 aa)). Residues 384-392 (LGKGSFGKV) and Lys407 each bind ATP. The active-site Proton acceptor is Asp502. The region spanning 639–707 (REIDWDALES…FSFINPHFTY (69 aa)) is the AGC-kinase C-terminal domain.

Belongs to the protein kinase superfamily. AGC Ser/Thr protein kinase family. PKC subfamily. In terms of tissue distribution, expressed selectively in neurons that receive, transmit and process environmental signals.

Its subcellular location is the membrane. The protein localises to the cytoplasm. It localises to the cytoskeleton. It carries out the reaction L-seryl-[protein] + ATP = O-phospho-L-seryl-[protein] + ADP + H(+). It catalyses the reaction L-threonyl-[protein] + ATP = O-phospho-L-threonyl-[protein] + ADP + H(+). In terms of biological role, PKC is activated by diacylglycerol which in turn phosphorylates a range of cellular proteins. PKC also serves as the receptor for phorbol esters, a class of tumor promoters. Involved in neuropeptide secretion in motor axons. Likely to act via the extracellular signal-regulated kinase/mitogen-activated protein kinase (ERK/MAPK) pathway in the signaling response to various sensory neurons; temperature, odor, taste, and osmolality. Its role in regulation differs depending on the neuron in which it is acting; thermosensation in AFD neurons, osmolality in ASH neurons, olfactory perception in AWA and AWC neurons. Promotes dauer formation mediated by the insulin/IGF pathway. Required for resistance to antimitotic toxins. This is Protein kinase C-like 1B from Caenorhabditis elegans.